Reading from the N-terminus, the 354-residue chain is Probable L-ascorbate-6-phosphate lactonase UlaG (354 aa).

Belongs to the UlaG family. Requires a divalent metal cation as cofactor.

It localises to the cytoplasm. It carries out the reaction L-ascorbate 6-phosphate + H2O = 3-dehydro-L-gulonate 6-phosphate. It functions in the pathway cofactor degradation; L-ascorbate degradation; D-xylulose 5-phosphate from L-ascorbate: step 1/4. Functionally, probably catalyzes the hydrolysis of L-ascorbate-6-P into 3-keto-L-gulonate-6-P. Is essential for L-ascorbate utilization under anaerobic conditions. The protein is Probable L-ascorbate-6-phosphate lactonase UlaG of Escherichia coli O127:H6 (strain E2348/69 / EPEC).